A 118-amino-acid chain; its full sequence is Small ribosomal subunit protein uS13 (118 aa).

Residues 94–118 (SLPVRGQRSKTNARTRKGPRKAIKK) are disordered.

The protein belongs to the universal ribosomal protein uS13 family. In terms of assembly, part of the 30S ribosomal subunit. Forms a loose heterodimer with protein S19. Forms two bridges to the 50S subunit in the 70S ribosome.

Its function is as follows. Located at the top of the head of the 30S subunit, it contacts several helices of the 16S rRNA. In the 70S ribosome it contacts the 23S rRNA (bridge B1a) and protein L5 of the 50S subunit (bridge B1b), connecting the 2 subunits; these bridges are implicated in subunit movement. Contacts the tRNAs in the A and P-sites. This Psychromonas ingrahamii (strain DSM 17664 / CCUG 51855 / 37) protein is Small ribosomal subunit protein uS13.